Consider the following 119-residue polypeptide: Large ribosomal subunit protein uL18 (119 aa).

Belongs to the universal ribosomal protein uL18 family. Part of the 50S ribosomal subunit; part of the 5S rRNA/L5/L18/L25 subcomplex. Contacts the 5S and 23S rRNAs.

Its function is as follows. This is one of the proteins that bind and probably mediate the attachment of the 5S RNA into the large ribosomal subunit, where it forms part of the central protuberance. The polypeptide is Large ribosomal subunit protein uL18 (Roseobacter denitrificans (strain ATCC 33942 / OCh 114) (Erythrobacter sp. (strain OCh 114))).